We begin with the raw amino-acid sequence, 282 residues long: Putative quercetin 2,3-dioxygenase VC_A0969 (282 aa).

The segment at 1 to 21 (MTKDREIRQTVPAQPTSDGDG) is disordered. Residues His-59, His-61, His-103, and Glu-105 each coordinate a divalent metal cation.

This sequence belongs to the pirin family. A divalent metal cation is required as a cofactor.

The catalysed reaction is quercetin + O2 = 2-(3,4-dihydroxybenzoyloxy)-4,6-dihydroxybenzoate + CO. It participates in flavonoid metabolism; quercetin degradation. Its function is as follows. Putative quercetin 2,3-dioxygenase. The sequence is that of Putative quercetin 2,3-dioxygenase VC_A0969 from Vibrio cholerae serotype O1 (strain ATCC 39315 / El Tor Inaba N16961).